The primary structure comprises 55 residues: uncharacterized protein (55 aa).

Positions 17 to 44 (QNVNIALTKKRLDTAQQNADQTLKMIQH) form a coiled coil.

This is an uncharacterized protein from Bacillus subtilis (strain 168).